Here is a 465-residue protein sequence, read N- to C-terminus: Fumarate hydratase class II (465 aa).

Residues 99-101, Arg-127, 130-133, 140-142, and Thr-188 contribute to the substrate site; these read SGT, HPND, and STN. The active-site Proton donor/acceptor is His-189. Ser-319 is an active-site residue. Residues Ser-320 and 325–327 contribute to the substrate site; that span reads KVN.

The protein belongs to the class-II fumarase/aspartase family. Fumarase subfamily. In terms of assembly, homotetramer.

The protein localises to the cytoplasm. It catalyses the reaction (S)-malate = fumarate + H2O. Its pathway is carbohydrate metabolism; tricarboxylic acid cycle; (S)-malate from fumarate: step 1/1. Involved in the TCA cycle. Catalyzes the stereospecific interconversion of fumarate to L-malate. This is Fumarate hydratase class II from Parasynechococcus marenigrum (strain WH8102).